Reading from the N-terminus, the 118-residue chain is Small ribosomal subunit protein uS13 (118 aa).

The segment at 91–118 (HRRGLPVRGQRTKTNARTRKGPRKPIKK) is disordered.

This sequence belongs to the universal ribosomal protein uS13 family. Part of the 30S ribosomal subunit. Forms a loose heterodimer with protein S19. Forms two bridges to the 50S subunit in the 70S ribosome.

Its function is as follows. Located at the top of the head of the 30S subunit, it contacts several helices of the 16S rRNA. In the 70S ribosome it contacts the 23S rRNA (bridge B1a) and protein L5 of the 50S subunit (bridge B1b), connecting the 2 subunits; these bridges are implicated in subunit movement. Contacts the tRNAs in the A and P-sites. The sequence is that of Small ribosomal subunit protein uS13 from Hamiltonella defensa subsp. Acyrthosiphon pisum (strain 5AT).